Reading from the N-terminus, the 501-residue chain is Vitamin D 25-hydroxylase (501 aa).

An N-terminal signal peptide occupies residues 1 to 26 (MWKLWRAEEGAAALGGALFLLLFALG). Residue Ala-250 participates in substrate binding. Cys-448 lines the heme pocket.

Belongs to the cytochrome P450 family. Homodimer. It depends on heme as a cofactor.

The protein localises to the endoplasmic reticulum membrane. Its subcellular location is the microsome membrane. It catalyses the reaction calciol + reduced [NADPH--hemoprotein reductase] + O2 = calcidiol + oxidized [NADPH--hemoprotein reductase] + H2O + H(+). The enzyme catalyses vitamin D2 + reduced [NADPH--hemoprotein reductase] + O2 = 25-hydroxyvitamin D2 + oxidized [NADPH--hemoprotein reductase] + H2O + H(+). The catalysed reaction is 1alpha-hydroxyvitamin D2 + reduced [NADPH--hemoprotein reductase] + O2 = 1alpha,25-dihydroxyvitamin D2 + oxidized [NADPH--hemoprotein reductase] + H2O + H(+). It carries out the reaction alfacalcidol + reduced [NADPH--hemoprotein reductase] + O2 = calcitriol + oxidized [NADPH--hemoprotein reductase] + H2O + H(+). Its pathway is hormone biosynthesis; vitamin D biosynthesis. Functionally, a cytochrome P450 monooxygenase involved in activation of vitamin D precursors. Catalyzes hydroxylation at C-25 of both forms of vitamin D, vitamin D(2) and D(3) (calciol). Can metabolize vitamin D analogs/prodrugs 1alpha-hydroxyvitamin D(2) (doxercalciferol) and 1alpha-hydroxyvitamin D(3) (alfacalcidol) forming 25-hydroxy derivatives. Mechanistically, uses molecular oxygen inserting one oxygen atom into a substrate, and reducing the second into a water molecule, with two electrons provided by NADPH via cytochrome P450 reductase (CPR; NADPH-ferrihemoprotein reductase). The sequence is that of Vitamin D 25-hydroxylase (CYP2R1) from Homo sapiens (Human).